The chain runs to 402 residues: Metacaspase-1 (402 aa).

Positions 1–79 are disordered; it reads MAYPGQGGHH…FAPPSGPIGP (79 aa). A compositionally biased stretch (low complexity) spans 23 to 45; sequence PAPHGYAQPGYGYAPPSGPPQGY. Residues His-193 and Cys-249 contribute to the active site.

It belongs to the peptidase C14B family.

Functionally, involved in cell death (apoptosis). The sequence is that of Metacaspase-1 (MCA1) from Mycosarcoma maydis (Corn smut fungus).